A 238-amino-acid polypeptide reads, in one-letter code: Insulin-like growth factor-binding protein 6 (238 aa).

Residues 1 to 25 (MTWDGLPTQPLLMLLMLLFAAGSGS) form the signal peptide. One can recognise an IGFBP N-terminal domain in the interval 26 to 108 (ALAGCPGCGA…LIGQGRCQRA (83 aa)). Disulfide bonds link Cys30–Cys33, Cys41–Cys45, Cys58–Cys64, Cys72–Cys85, and Cys79–Cys105. Residues 104-159 (RCQRARGPSEETTKESKPQGGASRSRDTNHRDRQKNPRTSAAPIRPNPVQDSEMGP) form a disordered region. Basic and acidic residues-rich tracts occupy residues 110-120 (GPSEETTKESK) and 127-138 (RSRDTNHRDRQK). One can recognise a Thyroglobulin type-1 domain in the interval 157-232 (MGPCRRHLDS…SPDGQGSTQC (76 aa)). Intrachain disulfides connect Cys160/Cys188, Cys199/Cys210, and Cys212/Cys232. The interval 218-238 (QPLPVSPDGQGSTQCSARSSG) is disordered. The segment covering 226–238 (GQGSTQCSARSSG) has biased composition (polar residues).

As to quaternary structure, interacts (via C-terminal domain) with PHB2. Post-translationally, O-glycosylated.

The protein resides in the secreted. Its function is as follows. IGF-binding proteins prolong the half-life of the IGFs and have been shown to either inhibit or stimulate the growth promoting effects of the IGFs on cell culture. They alter the interaction of IGFs with their cell surface receptors. Activates the MAPK signaling pathway and induces cell migration. This Mus musculus (Mouse) protein is Insulin-like growth factor-binding protein 6 (Igfbp6).